Reading from the N-terminus, the 361-residue chain is Chorismate synthase (361 aa).

2 residues coordinate NADP(+): arginine 48 and arginine 54. FMN contacts are provided by residues arginine 125–serine 127, asparagine 238–alanine 239, glycine 278, lysine 293–serine 297, and arginine 319.

The protein belongs to the chorismate synthase family. As to quaternary structure, homotetramer. FMNH2 serves as cofactor.

The catalysed reaction is 5-O-(1-carboxyvinyl)-3-phosphoshikimate = chorismate + phosphate. The protein operates within metabolic intermediate biosynthesis; chorismate biosynthesis; chorismate from D-erythrose 4-phosphate and phosphoenolpyruvate: step 7/7. In terms of biological role, catalyzes the anti-1,4-elimination of the C-3 phosphate and the C-6 proR hydrogen from 5-enolpyruvylshikimate-3-phosphate (EPSP) to yield chorismate, which is the branch point compound that serves as the starting substrate for the three terminal pathways of aromatic amino acid biosynthesis. This reaction introduces a second double bond into the aromatic ring system. The polypeptide is Chorismate synthase (Yersinia enterocolitica serotype O:8 / biotype 1B (strain NCTC 13174 / 8081)).